Reading from the N-terminus, the 435-residue chain is Nuclear receptor subfamily 6 group A member 1 (435 aa).

Positions 11-86 (QRACLICGDR…MGMNRKAIRE (76 aa)) form a DNA-binding region, nuclear receptor. 2 NR C4-type zinc fingers span residues 14–34 (CLIC…CEGC) and 50–69 (CSRD…CQYC). A disordered region spans residues 84–157 (IREDGMPGGR…VSTPSSSRSM (74 aa)). Over residues 121–141 (NTSWSNNGDSDHSSPGNGVSE) the composition is skewed to polar residues. Residues 142-156 (SNQPSPVSTPSSSRS) are compositionally biased toward low complexity. Residues 204–435 (QSHTLINQLL…HSCKTSLTKE (232 aa)) form the NR LBD domain.

It belongs to the nuclear hormone receptor family. NR6 subfamily. As to quaternary structure, homodimer.

The protein localises to the cytoplasm. The protein resides in the nucleus. Its function is as follows. Probable orphan nuclear receptor. Binds to a response element containing repeats of the motif 5'-AGGTCA-3'. Required for anterior-posterior patterning during organogenesis. Acts with chordin to play a role in patterning the midbrain-hindbrain. Isoform Em is required for integrin-mediated cell matrix interaction during neurulation and for the morphogenetic movements leading to formation of the neural tube. Also mediates the effect of retinoic acid on primary neurogenesis. The polypeptide is Nuclear receptor subfamily 6 group A member 1 (Xenopus tropicalis (Western clawed frog)).